Consider the following 59-residue polypeptide: Large ribosomal subunit protein uL30 (59 aa).

The protein belongs to the universal ribosomal protein uL30 family. In terms of assembly, part of the 50S ribosomal subunit.

This chain is Large ribosomal subunit protein uL30, found in Citrobacter koseri (strain ATCC BAA-895 / CDC 4225-83 / SGSC4696).